We begin with the raw amino-acid sequence, 198 residues long: COMM domain-containing protein 9 (198 aa).

An N-acetylalanine modification is found at Ala2. The COMM domain maps to 122 to 196 (RLVDLDWRVD…RIRDQLSAVA (75 aa)).

It belongs to the COMM domain-containing protein 9 family. As to quaternary structure, component of the commander complex consisting of the CCC subcomplex and the retriever subcomplex. Component of the CCC (COMMD/CCDC22/CCDC93) subcomplex consisting of COMMD1, COMMD2, COMMD3, COMMD4, COMMD5, COMMD6, COMMD7, COMMD8, COMMD9, COMMD10, CCDC22 and CCDC93; within the complex forms a heterodimer with COMMD7. Interacts with RELB and NFKB1/p105. Interacts with CCDC22, CCDC93, SCNN1B, CUL1. Ubiquitous.

Its subcellular location is the nucleus. The protein localises to the cytoplasmic vesicle. In terms of biological role, scaffold protein in the commander complex that is essential for endosomal recycling of transmembrane cargos; the commander complex is composed of the CCC subcomplex and the retriever subcomplex. May modulate activity of cullin-RING E3 ubiquitin ligase (CRL) complexes. May down-regulate activation of NF-kappa-B. Modulates Na(+) transport in epithelial cells by regulation of apical cell surface expression of amiloride-sensitive sodium channel (ENaC) subunits. The polypeptide is COMM domain-containing protein 9 (COMMD9) (Homo sapiens (Human)).